The chain runs to 669 residues: p135Gag-Myb-Ets-transforming protein (669 aa).

Residues 1–10 (NSTMRRKVEQ) show a composition bias toward basic and acidic residues. Disordered regions lie at residues 1 to 27 (NSTMRRKVEQEGYLQESSKAGLPSATT) and 132 to 153 (TQNHTANYPGWHSTTVADNTMT). The tract at residues 90-142 (PAAAAIQRHYNDEDPEKEKRIKELELLLMSTENELKGQQALPTQNHTANYPGW) is transcriptional activation domain. One can recognise a PNT domain in the interval 276-361 (ATFSGFAKEQ…EHLEILQKEE (86 aa)). The ETS DNA-binding region spans 556 to 640 (GSGPIQLWQF…AGKRYVYRFV (85 aa)).

It is found in the host nucleus. Its function is as follows. DNA-binding protein that specifically recognizes the sequence 5'-YAAC[GT]G-3'. The Myb-Ets protein induces predominantly erythroblastosis in chicken and transforms avian erythroblasts and immature myelomonocytic cells in culture. It appears that the Ets domain is responsible for the effects on erythroid cells and that the Myb domain encodes the myeloid-transforming capacity. The polypeptide is p135Gag-Myb-Ets-transforming protein (GAG) (Avian leukemia virus E26).